The following is a 623-amino-acid chain: Dictomallein-5 (623 aa).

A signal peptide spans 1–21 (MKIFIIKIILVLFNYVLLSYS). In terms of domain architecture, Peptidase M66 spans 174-435 (PNVGQDYTLK…QNYFKNSIYY (262 aa)). H327 provides a ligand contact to Zn(2+). The active site involves E328. Zn(2+)-binding residues include H331 and H337.

This sequence belongs to the dictomallein family. The cofactor is Zn(2+).

The protein localises to the secreted. In Dictyostelium discoideum (Social amoeba), this protein is Dictomallein-5 (dtmlE).